The sequence spans 807 residues: Glycerol-3-phosphate acyltransferase (807 aa).

The HXXXXD motif signature appears at 305–310 (CHRSHM).

This sequence belongs to the GPAT/DAPAT family.

The protein localises to the cell inner membrane. It carries out the reaction sn-glycerol 3-phosphate + an acyl-CoA = a 1-acyl-sn-glycero-3-phosphate + CoA. The protein operates within phospholipid metabolism; CDP-diacylglycerol biosynthesis; CDP-diacylglycerol from sn-glycerol 3-phosphate: step 1/3. In Escherichia coli O139:H28 (strain E24377A / ETEC), this protein is Glycerol-3-phosphate acyltransferase.